The sequence spans 518 residues: Cytochrome P450 CYP72A219 (518 aa).

The helical transmembrane segment at 2–22 (ELVLKLISSFCAIVVVILLGW) threads the bilayer. Cys-465 contacts heme.

The protein belongs to the cytochrome P450 family. It depends on heme as a cofactor.

The protein resides in the membrane. Probable heme-thiolate monooxygenase. The chain is Cytochrome P450 CYP72A219 from Panax ginseng (Korean ginseng).